Reading from the N-terminus, the 443-residue chain is Flavastacin (443 aa).

Residues 1 to 15 (MTRKLLILSGCLILA) form the signal peptide. A propeptide spans 16-91 (LNSCKSDMET…ANPDISTVER (76 aa)) (activation peptide). Residues 92 to 289 (STIVSSFIKT…AGINHLYGPV (198 aa)) form the Peptidase M12A domain. His-189 serves as a coordination point for Zn(2+). Glu-190 is a catalytic residue. Positions 193 and 199 each coordinate Zn(2+). Positions 297 to 440 (GTYTLTTSLA…PYTKQRFTLT (144 aa)) constitute a Ricin B-type lectin domain. The O-linked (Man...) serine glycan is linked to Ser-355.

It depends on Zn(2+) as a cofactor. O-linked glycan consists of the Man, GlcNAc, GlcU, Glc, GlcU, Rha, Man heptasaccharide.

It carries out the reaction Hydrolyzes polypeptides on the amino-side of Asp in -Xaa-|-Asp-. Acts very slowly on -Xaa-|-Glu.. Functionally, zinc metallendopeptidase that cleaves preferentially on N-terminal side of aspartate-containing substrates. The sequence is that of Flavastacin from Elizabethkingia meningoseptica (Chryseobacterium meningosepticum).